We begin with the raw amino-acid sequence, 681 residues long: DNA ligase (681 aa).

NAD(+) contacts are provided by residues 34–38 (DEEYD), 83–84 (SL), and E112. Catalysis depends on K114, which acts as the N6-AMP-lysine intermediate. Residues R135, E169, K285, and K309 each contribute to the NAD(+) site. Positions 403, 406, 422, and 427 each coordinate Zn(2+). Residues 584 to 673 (TTSNILDGLT…GVELKESWKK (90 aa)) enclose the BRCT domain.

Belongs to the NAD-dependent DNA ligase family. LigA subfamily. Mg(2+) serves as cofactor. It depends on Mn(2+) as a cofactor.

It catalyses the reaction NAD(+) + (deoxyribonucleotide)n-3'-hydroxyl + 5'-phospho-(deoxyribonucleotide)m = (deoxyribonucleotide)n+m + AMP + beta-nicotinamide D-nucleotide.. Functionally, DNA ligase that catalyzes the formation of phosphodiester linkages between 5'-phosphoryl and 3'-hydroxyl groups in double-stranded DNA using NAD as a coenzyme and as the energy source for the reaction. It is essential for DNA replication and repair of damaged DNA. This chain is DNA ligase, found in Fervidobacterium nodosum (strain ATCC 35602 / DSM 5306 / Rt17-B1).